The primary structure comprises 173 residues: Alpha-crystallin B chain (173 aa).

Residue Met1 is modified to N-acetylmethionine. Residues 54–162 (RLPSWIESGL…PERSIPITRE (109 aa)) enclose the sHSP domain. The Zn(2+) site is built by His81, His102, Glu104, and His109.

It belongs to the small heat shock protein (HSP20) family. Heteromer composed of three CRYAA and one CRYAB subunits. Aggregates with homologous proteins, including the small heat shock protein HSPB1, to form large heteromeric complexes. Inter-subunit bridging via zinc ions enhances stability, which is crucial as there is no protein turn over in the lens.

Functionally, may contribute to the transparency and refractive index of the lens. In Aquarana catesbeiana (American bullfrog), this protein is Alpha-crystallin B chain (CRYAB).